Reading from the N-terminus, the 465-residue chain is ATP synthase subunit beta (465 aa).

152 to 159 serves as a coordination point for ATP; it reads GGAGVGKT.

It belongs to the ATPase alpha/beta chains family. In terms of assembly, F-type ATPases have 2 components, CF(1) - the catalytic core - and CF(0) - the membrane proton channel. CF(1) has five subunits: alpha(3), beta(3), gamma(1), delta(1), epsilon(1). CF(0) has three main subunits: a(1), b(2) and c(9-12). The alpha and beta chains form an alternating ring which encloses part of the gamma chain. CF(1) is attached to CF(0) by a central stalk formed by the gamma and epsilon chains, while a peripheral stalk is formed by the delta and b chains.

It is found in the cell membrane. The enzyme catalyses ATP + H2O + 4 H(+)(in) = ADP + phosphate + 5 H(+)(out). Produces ATP from ADP in the presence of a proton gradient across the membrane. The catalytic sites are hosted primarily by the beta subunits. The polypeptide is ATP synthase subunit beta (Ruminiclostridium cellulolyticum (strain ATCC 35319 / DSM 5812 / JCM 6584 / H10) (Clostridium cellulolyticum)).